We begin with the raw amino-acid sequence, 85 residues long: Probable oxaloacetate decarboxylase gamma chain (85 aa).

A helical transmembrane segment spans residues 11–33; it reads AATLMVTGMAVVFIFLTILVYLV.

This sequence belongs to the OadG family. In terms of assembly, heterotrimer of an alpha, a beta and a gamma subunit. Na(+) serves as cofactor.

The protein localises to the cell membrane. It carries out the reaction oxaloacetate + 2 Na(+)(in) + H(+) = pyruvate + 2 Na(+)(out) + CO2. Its function is as follows. Catalyzes the decarboxylation of oxaloacetate coupled to Na(+) translocation. This chain is Probable oxaloacetate decarboxylase gamma chain, found in Vibrio parahaemolyticus serotype O3:K6 (strain RIMD 2210633).